Consider the following 856-residue polypeptide: DNA mismatch repair protein MutS (856 aa).

ATP is bound at residue 618–625 (GPNMGGKS).

Belongs to the DNA mismatch repair MutS family.

This protein is involved in the repair of mismatches in DNA. It is possible that it carries out the mismatch recognition step. This protein has a weak ATPase activity. In Shewanella putrefaciens (strain CN-32 / ATCC BAA-453), this protein is DNA mismatch repair protein MutS.